Reading from the N-terminus, the 525-residue chain is Probable lipid II flippase MurJ (525 aa).

14 helical membrane passes run 10-30 (LLKS…LGLV), 32-52 (DVVV…FFAN), 100-120 (VLVT…TALF), 140-160 (LASL…FVAL), 171-191 (FAVS…CAWY), 203-223 (LAIG…PFLI), 247-267 (MIPA…DSFV), 285-305 (LLEF…LPAL), 330-350 (FLGI…LMVL), 368-388 (LLAY…APGY), 402-422 (IIAM…YGYV), 423-443 (GLAV…YRGL), 455-475 (TVWF…ALLW), and 495-515 (LTGL…LLGV).

Belongs to the MurJ/MviN family.

It localises to the cell inner membrane. The protein operates within cell wall biogenesis; peptidoglycan biosynthesis. Involved in peptidoglycan biosynthesis. Transports lipid-linked peptidoglycan precursors from the inner to the outer leaflet of the cytoplasmic membrane. This is Probable lipid II flippase MurJ from Vibrio cholerae serotype O1 (strain ATCC 39315 / El Tor Inaba N16961).